We begin with the raw amino-acid sequence, 155 residues long: Aspartate carbamoyltransferase regulatory chain (155 aa).

Cys113, Cys118, Cys139, and Cys142 together coordinate Zn(2+).

The protein belongs to the PyrI family. Contains catalytic and regulatory chains. Zn(2+) is required as a cofactor.

Its function is as follows. Involved in allosteric regulation of aspartate carbamoyltransferase. The protein is Aspartate carbamoyltransferase regulatory chain of Methanoculleus marisnigri (strain ATCC 35101 / DSM 1498 / JR1).